Consider the following 40-residue polypeptide: Large ribosomal subunit protein bL36 (40 aa).

It belongs to the bacterial ribosomal protein bL36 family.

The sequence is that of Large ribosomal subunit protein bL36 from Corynebacterium diphtheriae (strain ATCC 700971 / NCTC 13129 / Biotype gravis).